Consider the following 197-residue polypeptide: Putative peptidyl-prolyl cis-trans isomerase (197 aa).

The 182-residue stretch at 14–195 (NEIKVVMHTN…YDVVIESIDV (182 aa)) folds into the PPIase cyclophilin-type domain.

It belongs to the cyclophilin-type PPIase family.

The catalysed reaction is [protein]-peptidylproline (omega=180) = [protein]-peptidylproline (omega=0). PPIases accelerate the folding of proteins. It catalyzes the cis-trans isomerization of proline imidic peptide bonds in oligopeptides. The sequence is that of Putative peptidyl-prolyl cis-trans isomerase from Staphylococcus epidermidis (strain ATCC 35984 / DSM 28319 / BCRC 17069 / CCUG 31568 / BM 3577 / RP62A).